Consider the following 101-residue polypeptide: Small ribosomal subunit protein uS10 (101 aa).

The protein belongs to the universal ribosomal protein uS10 family. As to quaternary structure, part of the 30S ribosomal subunit.

Its function is as follows. Involved in the binding of tRNA to the ribosomes. This Mycobacterium bovis (strain ATCC BAA-935 / AF2122/97) protein is Small ribosomal subunit protein uS10.